The following is a 339-amino-acid chain: Glyceraldehyde-3-phosphate dehydrogenase (339 aa).

NAD(+)-binding positions include 12-13 (RI), Asp34, and Lys79. Residues 150-152 (SCT), Thr181, 210-211 (TG), and Arg233 contribute to the D-glyceraldehyde 3-phosphate site. The Nucleophile role is filled by Cys151. Asn316 provides a ligand contact to NAD(+).

It belongs to the glyceraldehyde-3-phosphate dehydrogenase family. Homotetramer.

The protein resides in the cytoplasm. It carries out the reaction D-glyceraldehyde 3-phosphate + phosphate + NAD(+) = (2R)-3-phospho-glyceroyl phosphate + NADH + H(+). It participates in carbohydrate degradation; glycolysis; pyruvate from D-glyceraldehyde 3-phosphate: step 1/5. The protein is Glyceraldehyde-3-phosphate dehydrogenase (GPD) of Cryptococcus neoformans var. neoformans serotype D (strain B-3501A) (Filobasidiella neoformans).